The following is a 128-amino-acid chain: Large ribosomal subunit protein bL17 (128 aa).

This sequence belongs to the bacterial ribosomal protein bL17 family. In terms of assembly, part of the 50S ribosomal subunit. Contacts protein L32.

This Baumannia cicadellinicola subsp. Homalodisca coagulata protein is Large ribosomal subunit protein bL17.